A 105-amino-acid chain; its full sequence is Cytochrome c-553-like (105 aa).

An N-terminal signal peptide occupies residues 1–29 (MAGIVSLVILAVALFSFMNFDPYVSQVLA). Heme c is bound by residues Cys45, Cys48, His49, and Met85.

Binds 1 heme c group covalently per subunit.

In Synechocystis sp. (strain ATCC 27184 / PCC 6803 / Kazusa), this protein is Cytochrome c-553-like (cytM).